Here is a 121-residue protein sequence, read N- to C-terminus: MIKKPDKKTLRQGKHKRVRRKVAGTGERPRLCIFKSLHHIYAQIIDDEKGVTLVAASTLEEGLKGLESKTNIAAAQEVGANIAERAREKGIIEVVFDRNGYKYHGSVAALANAAREKGLVF.

Over residues 1–22 the composition is skewed to basic residues; the sequence is MIKKPDKKTLRQGKHKRVRRKV. Residues 1–23 form a disordered region; that stretch reads MIKKPDKKTLRQGKHKRVRRKVA.

Belongs to the universal ribosomal protein uL18 family. Part of the 50S ribosomal subunit; part of the 5S rRNA/L5/L18/L25 subcomplex. Contacts the 5S and 23S rRNAs.

In terms of biological role, this is one of the proteins that bind and probably mediate the attachment of the 5S RNA into the large ribosomal subunit, where it forms part of the central protuberance. The polypeptide is Large ribosomal subunit protein uL18 (Syntrophomonas wolfei subsp. wolfei (strain DSM 2245B / Goettingen)).